The following is a 330-amino-acid chain: D-alanine--D-alanine ligase (330 aa).

Positions 122–323 (NRFLSGFGIR…MKEVLCTIIR (202 aa)) constitute an ATP-grasp domain. Position 151–206 (151–206 (IARMGLPLFVKPNVGGSSIATTKVVEAAQLLPAIEQAFSEGEEVMIERLICGTEVT)) interacts with ATP. Mg(2+)-binding residues include D277, E290, and N292.

It belongs to the D-alanine--D-alanine ligase family. The cofactor is Mg(2+). Requires Mn(2+) as cofactor.

It localises to the cytoplasm. The catalysed reaction is 2 D-alanine + ATP = D-alanyl-D-alanine + ADP + phosphate + H(+). Its pathway is cell wall biogenesis; peptidoglycan biosynthesis. Functionally, cell wall formation. The chain is D-alanine--D-alanine ligase from Porphyromonas gingivalis (strain ATCC BAA-308 / W83).